A 447-amino-acid chain; its full sequence is Tubulin beta-4 chain (447 aa).

Gln-11, Glu-69, Ser-138, Gly-142, Thr-143, Gly-144, Asn-204, and Asn-226 together coordinate GTP. Position 69 (Glu-69) interacts with Mg(2+). Residues 423 to 447 (QQYQDATADEEGEYEDEEQQEADDM) form a disordered region. The span at 429–447 (TADEEGEYEDEEQQEADDM) shows a compositional bias: acidic residues.

It belongs to the tubulin family. Dimer of alpha and beta chains. A typical microtubule is a hollow water-filled tube with an outer diameter of 25 nm and an inner diameter of 15 nM. Alpha-beta heterodimers associate head-to-tail to form protofilaments running lengthwise along the microtubule wall with the beta-tubulin subunit facing the microtubule plus end conferring a structural polarity. Microtubules usually have 13 protofilaments but different protofilament numbers can be found in some organisms and specialized cells. The cofactor is Mg(2+). As to expression, expressed in roots and leaf sheaths.

It localises to the cytoplasm. Its subcellular location is the cytoskeleton. Its function is as follows. Tubulin is the major constituent of microtubules, a cylinder consisting of laterally associated linear protofilaments composed of alpha- and beta-tubulin heterodimers. Microtubules grow by the addition of GTP-tubulin dimers to the microtubule end, where a stabilizing cap forms. Below the cap, tubulin dimers are in GDP-bound state, owing to GTPase activity of alpha-tubulin. This chain is Tubulin beta-4 chain (TUBB4), found in Oryza sativa subsp. japonica (Rice).